A 570-amino-acid polypeptide reads, in one-letter code: Sulfite reductase [NADPH] hemoprotein beta-component (570 aa).

Residues C434, C440, C479, and C483 each contribute to the [4Fe-4S] cluster site. C483 contributes to the siroheme binding site.

The protein belongs to the nitrite and sulfite reductase 4Fe-4S domain family. In terms of assembly, alpha(8)-beta(8). The alpha component is a flavoprotein, the beta component is a hemoprotein. Siroheme serves as cofactor. The cofactor is [4Fe-4S] cluster.

The enzyme catalyses hydrogen sulfide + 3 NADP(+) + 3 H2O = sulfite + 3 NADPH + 4 H(+). It participates in sulfur metabolism; hydrogen sulfide biosynthesis; hydrogen sulfide from sulfite (NADPH route): step 1/1. Its function is as follows. Component of the sulfite reductase complex that catalyzes the 6-electron reduction of sulfite to sulfide. This is one of several activities required for the biosynthesis of L-cysteine from sulfate. The protein is Sulfite reductase [NADPH] hemoprotein beta-component (cysI) of Escherichia coli (strain K12).